The primary structure comprises 207 residues: MLRIIFLLSLLFALSNDSVQDFCVANLKRAETPAGYPCIRPIHVKASDFVFSLGTPGNTTNIISAAVTPGFVAQFPALNGLGISTARLDLAPKGVIPMHTHPGASEVLFVLDGSITAGFISSANSVYVQTLKPGQVMVFPQGLLHFQINAGKTPAAALVTFSSASPGLQILDFALFANTLSTELVSATTFLPPATVKTLKGVLGGTG.

Positions Met1–Asp17 are cleaved as a signal peptide. A disulfide bond links Cys23 and Cys38. A Cupin type-1 domain is found at Phe51–Lys197. An N-linked (GlcNAc...) asparagine glycan is attached at Asn58. Mn(2+)-binding residues include His99, His101, Glu106, and His145.

The protein belongs to the germin family. Oligomer (believed to be a pentamer but probably hexamer).

Its subcellular location is the secreted. The protein resides in the extracellular space. The protein localises to the apoplast. Its function is as follows. May play a role in plant defense. Probably has no oxalate oxidase activity even if the active site is conserved. The protein is Germin-like protein 1 (GER1) of Brassica napus (Rape).